We begin with the raw amino-acid sequence, 100 residues long: Mitochondrial import inner membrane translocase subunit Tim10 B (100 aa).

A Twin CX3C motif motif is present at residues Cys25–Cys49. Disulfide bonds link Cys25/Cys49 and Cys29/Cys45.

It belongs to the small Tim family. In terms of assembly, component of the TIM22 complex, which core is composed of TIMM22, associated with TIMM10 (TIMM10A and/or TIMM10B), TIMM9, AGK and TIMM29.

It is found in the mitochondrion inner membrane. In terms of biological role, component of the TIM22 complex, a complex that mediates the import and insertion of multi-pass transmembrane proteins into the mitochondrial inner membrane. The TIM22 complex forms a twin-pore translocase that uses the membrane potential as the external driving force. In the TIM22 complex, it may act as a docking point for the soluble 70 kDa complex that guides the target proteins in transit through the aqueous mitochondrial intermembrane space. The protein is Mitochondrial import inner membrane translocase subunit Tim10 B (Timm10b) of Rattus norvegicus (Rat).